The chain runs to 1357 residues: DNA-directed RNA polymerase subunit beta (1357 aa).

This sequence belongs to the RNA polymerase beta chain family. As to quaternary structure, the RNAP catalytic core consists of 2 alpha, 1 beta, 1 beta' and 1 omega subunit. When a sigma factor is associated with the core the holoenzyme is formed, which can initiate transcription.

The catalysed reaction is RNA(n) + a ribonucleoside 5'-triphosphate = RNA(n+1) + diphosphate. Its function is as follows. DNA-dependent RNA polymerase catalyzes the transcription of DNA into RNA using the four ribonucleoside triphosphates as substrates. This Pseudomonas putida (strain GB-1) protein is DNA-directed RNA polymerase subunit beta.